The following is a 108-amino-acid chain: MSILKKSTKLAQTAMLRQILKRCSSLGKKNGGGGYEEVDLPLDVPKGHFPVYVGHNRSRYIVPISFLTNLDFQCLLRRAEEEFGFDHDMGLTIPCDELFFQDLTSMIR.

The protein belongs to the ARG7 family. In terms of tissue distribution, expressed in seedlings, leaves and flowers.

Its subcellular location is the cell membrane. Functionally, provide a mechanistic link between auxin and plasma membrane H(+)-ATPases (PM H(+)-ATPases, e.g. AHA1 and AHA2), and triggers PM H(+)-ATPases activity by promoting phosphorylation of their C-terminal autoinhibitory domain as a result of PP2C-D subfamily of type 2C phosphatases inhibition, thus leading to the acidification of the apoplast and the facilitation of solutes and water uptake to drive cell expansion. Triggers plant growth probably by promoting cell elongation. Regulates branch angles and bending. In Arabidopsis thaliana (Mouse-ear cress), this protein is Protein SMALL AUXIN UP-REGULATED RNA 8.